Here is a 178-residue protein sequence, read N- to C-terminus: Interleukin-10 (178 aa).

A signal peptide spans 1-18; sequence MPGSALLCCLLLLAGVKT. Asparagine 29 is a glycosylation site (N-linked (GlcNAc...) asparagine). Disulfide bonds link cysteine 30/cysteine 126 and cysteine 80/cysteine 132. Asparagine 134 carries an N-linked (GlcNAc...) asparagine glycan.

It belongs to the IL-10 family. In terms of assembly, homodimer. Interacts with IL10RA and IL10RB.

The protein localises to the secreted. Its function is as follows. Major immune regulatory cytokine that acts on many cells of the immune system where it has profound anti-inflammatory functions, limiting excessive tissue disruption caused by inflammation. Mechanistically, IL10 binds to its heterotetrameric receptor comprising IL10RA and IL10RB leading to JAK1 and STAT2-mediated phosphorylation of STAT3. In turn, STAT3 translocates to the nucleus where it drives expression of anti-inflammatory mediators. Targets antigen-presenting cells (APCs) such as macrophages and monocytes and inhibits their release of pro-inflammatory cytokines including granulocyte-macrophage colony-stimulating factor /GM-CSF, granulocyte colony-stimulating factor/G-CSF, IL-1 alpha, IL-1 beta, IL-6, IL-8 and TNF-alpha. Also interferes with antigen presentation by reducing the expression of MHC-class II and co-stimulatory molecules, thereby inhibiting their ability to induce T cell activation. In addition, controls the inflammatory response of macrophages by reprogramming essential metabolic pathways including mTOR signaling. This Rattus norvegicus (Rat) protein is Interleukin-10 (Il10).